We begin with the raw amino-acid sequence, 380 residues long: Glutamate 5-kinase (380 aa).

Lys-20 provides a ligand contact to ATP. Substrate-binding residues include Ser-59, Asp-146, and Asn-158. 220–226 (TGGMYSK) lines the ATP pocket. The PUA domain maps to 285-363 (SGTVTVDEGA…HEVAAILGDA (79 aa)).

Belongs to the glutamate 5-kinase family.

Its subcellular location is the cytoplasm. It carries out the reaction L-glutamate + ATP = L-glutamyl 5-phosphate + ADP. It functions in the pathway amino-acid biosynthesis; L-proline biosynthesis; L-glutamate 5-semialdehyde from L-glutamate: step 1/2. Its function is as follows. Catalyzes the transfer of a phosphate group to glutamate to form L-glutamate 5-phosphate. In Nitratidesulfovibrio vulgaris (strain ATCC 29579 / DSM 644 / CCUG 34227 / NCIMB 8303 / VKM B-1760 / Hildenborough) (Desulfovibrio vulgaris), this protein is Glutamate 5-kinase.